We begin with the raw amino-acid sequence, 54 residues long: UPF0391 membrane protein PFL_0093 (54 aa).

Helical transmembrane passes span 4–24 and 29–49; these read WAIT…GGIA and GIAK…FFFG.

It belongs to the UPF0391 family.

The protein resides in the cell membrane. The polypeptide is UPF0391 membrane protein PFL_0093 (Pseudomonas fluorescens (strain ATCC BAA-477 / NRRL B-23932 / Pf-5)).